The following is a 1093-amino-acid chain: Electroneutral sodium bicarbonate exchanger 1 (1093 aa).

2 disordered regions span residues 1–25 (MPAAGSNEPDGVLSYQRPDEEAVVD) and 55–95 (PLGR…HDTP). The Extracellular portion of the chain corresponds to 1–478 (MPAAGSNEPD…DYRDALSLQC (478 aa)). A compositionally biased stretch (basic residues) spans 59–77 (QSHRHHRTHGQKHRRRGRG). Zn(2+) contacts are provided by F167 and L169. Residues 340 to 344 (LFILL) carry the VTVLP; mediates dimerization motif. The chain crosses the membrane as a helical span at residues 479 to 499 (LASFLFLYCACMSPVITFGGL). The Cytoplasmic portion of the chain corresponds to 500-523 (LGEATEGRISAIESLFGASMTGIA). The chain crosses the membrane as a helical span at residues 524-544 (YSLFAGQALTILGSTGPVLVF). Over 545–565 (EKILFKFCKDYALSYLSLRAC) the chain is Extracellular. A helical transmembrane segment spans residues 566 to 586 (IGLWTAFLCIVLVATDASSLV). The Cytoplasmic portion of the chain corresponds to 587–595 (CYITRFTEE). The helical transmembrane segment at 596–616 (AFASLICIIFIYEAIEKLIHL) threads the bilayer. The Extracellular segment spans residues 617-687 (AETYPIHMHS…EFMGSACGHH (71 aa)). 2 disulfides stabilise this stretch: C636/C684 and C638/C672. N-linked (GlcNAc) asparagine glycosylation occurs at N646. The chain crosses the membrane as a helical span at residues 688–708 (GPYTPDVLFWSCILFFTTFIL). Topologically, residues 709-731 (SSTLKTFKTSRYFPTRVRSMVSD) are cytoplasmic. Residues 732 to 752 (FAVFLTIFTMVIIDFLIGVPS) form a helical membrane-spanning segment. Over 753-778 (PKLQVPSVFKPTRDDRGWIINPIGPN) the chain is Extracellular. The helical transmembrane segment at 779–799 (PWWTVIAAIIPALLCTILIFM) threads the bilayer. Topologically, residues 800–824 (DQQITAVIINRKEHKLKKGCGYHLD) are cytoplasmic. Residues 825–845 (LLMVAIMLGVCSIMGLPWFVA) form a helical membrane-spanning segment. Over 846-881 (ATVLSITHVNSLKLESECSAPGEQPKFLGIREQRVT) the chain is Extracellular. The helical transmembrane segment at 882–902 (GLMIFVLMGCSVFMTAILKFI) threads the bilayer. The Cytoplasmic segment spans residues 903–904 (PM). Residues 905–925 (PVLYGVFLYMGVSSLQGIQFF) traverse the membrane as a helical segment. Over 926-962 (DRLKLFGMPAKHQPDFIYLRHVPLRKVHLFTLIQLTC) the chain is Extracellular. A helical membrane pass occupies residues 963–983 (LVLLWVIKASPAAIVFPMMVL). Over 984–1093 (ALVFVRKVMD…GNAKEKSLFN (110 aa)) the chain is Cytoplasmic. Residues 1010–1036 (ESKKKKLDDAKKKAKEEEEAEKMLEIG) adopt a coiled-coil conformation.

It belongs to the anion exchanger (TC 2.A.31) family. In terms of assembly, homodimer. Expressed in the pyramidal cells of the hippocampus (at protein level). Highly expressed in all major regions of the brain, spinal column and in testis, and moderate levels in trachea, thyroid and medulla region of kidney. Low expression levels observed in pancreas and kidney cortex. As to expression, expressed in the brain. In terms of tissue distribution, expressed in the brain, heart and kidney.

It localises to the apical cell membrane. It is found in the basolateral cell membrane. The protein localises to the cytoplasmic vesicle. Its subcellular location is the secretory vesicle. The protein resides in the synaptic vesicle membrane. It localises to the cell membrane. It carries out the reaction 2 hydrogencarbonate(out) + chloride(in) + Na(+)(out) = 2 hydrogencarbonate(in) + chloride(out) + Na(+)(in). Its activity is regulated as follows. Activity is inhibited by 4,4'-Di-isothiocyanatostilbene-2,2'-disulfonic acid (DIDS - an inhibitor of several anion channels and transporters). Activity is inhibited by 4,4'-Di-isothiocyanatostilbene-2,2'-disulfonic acid (DIDS - an inhibitor of several anion channels and transporters). Zinc-binding negatively regulates its activity. Its function is as follows. Mediates electroneutral sodium- and carbonate-dependent chloride-HCO3(-) exchange with a Na(+):HCO3(-) stoichiometry of 2:1. Plays a major role in pH regulation in neurons. Mediates sodium reabsorption in the renal cortical collecting ducts. In Homo sapiens (Human), this protein is Electroneutral sodium bicarbonate exchanger 1.